The following is a 167-amino-acid chain: I-Kappa-B like protein F2 (167 aa).

ANK repeat units follow at residues 54–86, 91–121, and 125–154; these read HGKQCVHIVSNPGIADPQEKLKLLMEWGADING, FGNTPLHIAAYTQNHKLATWLCNQPGINMGI, and LFKTPYYVACERHDLKIMNILRAKGTRCGV.

The protein belongs to the polydnaviridae I-Kappa-B-like protein family.

Functionally, suppresses the host immune response through NF-kappa-B inactivation. Possesses ankyrin repeat domains required for NF-kappa-B binding but lacks the regulatory regions required for dissociation from NF-kappa-B and degradation. Therefore, prevents host NF-kappa-B release and subsequent activation. The protein is I-Kappa-B like protein F2 (F3) of Microplitis demolitor bracovirus (isolate Webb) (MdBV).